The following is a 129-amino-acid chain: Large ribosomal subunit protein bL21 (129 aa).

This sequence belongs to the bacterial ribosomal protein bL21 family. As to quaternary structure, part of the 50S ribosomal subunit. Contacts protein L20.

This protein binds to 23S rRNA in the presence of protein L20. In Microcystis aeruginosa (strain NIES-843 / IAM M-2473), this protein is Large ribosomal subunit protein bL21.